Here is a 642-residue protein sequence, read N- to C-terminus: Extracellular metalloproteinase 5 (642 aa).

Positions 1-19 (MHGLLLAAGLLSLPLHVLA) are cleaved as a signal peptide. Residues 20 to 246 (HPQPSTTTSL…VHNVVDYVAH (227 aa)) constitute a propeptide that is removed on maturation. Asn287 is a glycosylation site (N-linked (GlcNAc...) asparagine). Residue His430 coordinates Zn(2+). Glu431 is an active-site residue. His434 serves as a coordination point for Zn(2+). N-linked (GlcNAc...) asparagine glycosylation is found at Asn595 and Asn624.

It belongs to the peptidase M36 family. Requires Zn(2+) as cofactor.

The protein resides in the secreted. Secreted metalloproteinase that allows assimilation of proteinaceous substrates and probably acts as a virulence factor. The chain is Extracellular metalloproteinase 5 (MEP5) from Arthroderma gypseum (strain ATCC MYA-4604 / CBS 118893) (Microsporum gypseum).